We begin with the raw amino-acid sequence, 224 residues long: Urease accessory protein UreF (224 aa).

Belongs to the UreF family. In terms of assembly, ureD, UreF and UreG form a complex that acts as a GTP-hydrolysis-dependent molecular chaperone, activating the urease apoprotein by helping to assemble the nickel containing metallocenter of UreC. The UreE protein probably delivers the nickel.

The protein localises to the cytoplasm. Required for maturation of urease via the functional incorporation of the urease nickel metallocenter. The protein is Urease accessory protein UreF of Klebsiella pneumoniae (strain 342).